A 335-amino-acid chain; its full sequence is Taste receptor type 2 member 119 (335 aa).

Residues 1–7 (MMEGHML) lie on the Extracellular side of the membrane. Residues 8 to 28 (FFLLVVVVQFLTGVLANGLIV) form a helical membrane-spanning segment. The Cytoplasmic segment spans residues 29 to 43 (VVNAIDLIMWKKMAP). The helical transmembrane segment at 44 to 64 (LDLLLFCLATSRIILQLCILF) threads the bilayer. Over 65-81 (AQLGLSCLVRHTLFADN) the chain is Extracellular. N81 carries an N-linked (GlcNAc...) asparagine glycan. Residues 82 to 102 (VTFVYIINELSLWFATWLGVF) traverse the membrane as a helical segment. Topologically, residues 103–124 (YCAKIATIPHPLFLWLKMRISR) are cytoplasmic. Residues 125–145 (LVPWLILASVVYVTVTTFIHS) form a helical membrane-spanning segment. Over 146–176 (RETSELPKQIFISFFSKNTTRVRPAHATLLS) the chain is Extracellular. N-linked (GlcNAc...) asparagine glycosylation is present at N163. A helical transmembrane segment spans residues 177-197 (VFVFGLTLPFLIFTVAVLLLL). Residues 198-224 (SSLWNHSRQMRTMVGTREPSRHALVSA) are Cytoplasmic-facing. A helical membrane pass occupies residues 225–245 (MLSILSFLILYLSHDMVAVLI). The Extracellular portion of the chain corresponds to 246 to 256 (CTQGLHFGSRT). The chain crosses the membrane as a helical span at residues 257-277 (FAFCLLVIGMYPSLHSIVLIL). Topologically, residues 278 to 335 (GNPKLKRNAKTFIVHCKCCHCARAWVTSRNPRLSDLPVPATHHSANKTSCSEACIMPS) are cytoplasmic.

This sequence belongs to the G-protein coupled receptor T2R family. In terms of tissue distribution, expressed in subsets of taste receptor cells of the tongue and palate epithelium and exclusively in gustducin-positive cells. Expressed in 15% taste bud cells in circumvallate and foliate papillae but only in 2% in fungiform papillae. Expressed in the gastro and duodenal tissue. Not expressed in colon, liver, heart and kidney.

The protein localises to the membrane. Functionally, gustducin-coupled receptor implicated in the perception of bitter compounds in the oral cavity and the gastrointestinal tract. Signals through PLCB2 and the calcium-regulated cation channel TRPM5. The polypeptide is Taste receptor type 2 member 119 (Tas2r119) (Mus musculus (Mouse)).